The primary structure comprises 529 residues: Probable serine carboxypeptidase ARB_06414 (529 aa).

An N-terminal signal peptide occupies residues 1-19 (MRGLSYFVLALSAIDAAAA). Positions 171–191 (PTDDNPSRPVGTGFSQGKPSV) are disordered. The active site involves serine 225. N-linked (GlcNAc...) asparagine glycosylation is found at asparagine 284 and asparagine 377. The active site involves aspartate 434. N-linked (GlcNAc...) asparagine glycans are attached at residues asparagine 440 and asparagine 448. The active site involves histidine 503.

It belongs to the peptidase S10 family.

The protein resides in the secreted. Its function is as follows. Removes acidic, neutral and basic amino acids as well as proline from the C-terminal position. The protein is Probable serine carboxypeptidase ARB_06414 of Arthroderma benhamiae (strain ATCC MYA-4681 / CBS 112371) (Trichophyton mentagrophytes).